Consider the following 187-residue polypeptide: MKQKLLELILTHAYRYSEQPFTLASGKKSRHYFNCKEITLVPDRLELLCKFIVERHLDESGILKPQAFGGLTMGADPICYGISLEFRKQDKNIYPLIVRKFSKDHGTNKLVEGAVHEVKSCVIVDDVITTGGSTIQAIRSMRDSGIVVVQGICILDRQEGGMDAILAEGVQMFPIFKKSDFGNLEHE.

5-phospho-alpha-D-ribose 1-diphosphate is bound by residues Arg-99, Lys-100, Lys-103, His-105, and 125 to 133 (DDVITTGGS). Residues Thr-129 and Arg-157 each coordinate orotate.

It belongs to the purine/pyrimidine phosphoribosyltransferase family. PyrE subfamily. Homodimer. Mg(2+) serves as cofactor.

It carries out the reaction orotidine 5'-phosphate + diphosphate = orotate + 5-phospho-alpha-D-ribose 1-diphosphate. It functions in the pathway pyrimidine metabolism; UMP biosynthesis via de novo pathway; UMP from orotate: step 1/2. In terms of biological role, catalyzes the transfer of a ribosyl phosphate group from 5-phosphoribose 1-diphosphate to orotate, leading to the formation of orotidine monophosphate (OMP). The polypeptide is Orotate phosphoribosyltransferase (Leptospira borgpetersenii serovar Hardjo-bovis (strain JB197)).